The primary structure comprises 560 residues: Secreted RxLR effector protein 142 (560 aa).

Positions 1-22 (MRRAYFVAIALLVAAGGKTAAG) are cleaved as a signal peptide. Disordered stretches follow at residues 48 to 73 (QSQN…ERTP) and 354 to 377 (INRP…LNNQ). Basic and acidic residues predominate over residues 54–72 (ESRDPKDDLKLSAGNEERT). The short motif at 56 to 71 (RDPKDDLKLSAGNEER) is the RxLR-dEER element. Positions 361 to 377 (GPSTNGATTSNGGLNNQ) are enriched in polar residues.

Belongs to the RxLR effector family.

The protein resides in the secreted. Its subcellular location is the host nucleus. In terms of biological role, secreted effector that completely suppresses the host cell death induced by cell death-inducing proteins. The polypeptide is Secreted RxLR effector protein 142 (Plasmopara viticola (Downy mildew of grapevine)).